The sequence spans 398 residues: MAKKKFNREKIHLNVGTIGHVDHGKTTLTAALTKVSSDLYGSECRPFDSIDNAPEERERGITISTSHVEYESETKHYAHVDCPGHADYIKNMITGAAQMDGAILVCSAVDGPMPQTREHILLARQVGVPTIIVYLNKADCVKDKELLELVEMEIRELLTEYDFDGNNTKIIIGSALLALENKDDNQLGTSSIIKLLEILDKNIPVPNRIIDKPFLMPIEDVFSISGRGTVVTGKIERGIIKTGEEIEIVGFKETIKTIVIGIEMFKKTLDEGFAGENVGILLRSIKREEVERGQVLIKSGTIKPHTNFICEVYILSKEEGGRHTPFFKGYKPQFYFRTTDITGICDLPKNIEMVMPGDNVKLIVKLLSSIAIEKGLRFAIREGGKTVGAGIITEVLND.

The tr-type G domain maps to 10–207 (KIHLNVGTIG…ILDKNIPVPN (198 aa)). Residues 19 to 26 (GHVDHGKT) are G1. Position 19–26 (19–26 (GHVDHGKT)) interacts with GTP. A Mg(2+)-binding site is contributed by threonine 26. The segment at 60-64 (GITIS) is G2. The segment at 81-84 (DCPG) is G3. GTP contacts are provided by residues 81–85 (DCPGH) and 136–139 (NKAD). Residues 136 to 139 (NKAD) are G4. The interval 174 to 176 (SAL) is G5.

The protein belongs to the TRAFAC class translation factor GTPase superfamily. Classic translation factor GTPase family. EF-Tu/EF-1A subfamily. In terms of assembly, monomer.

The protein localises to the cytoplasm. It carries out the reaction GTP + H2O = GDP + phosphate + H(+). GTP hydrolase that promotes the GTP-dependent binding of aminoacyl-tRNA to the A-site of ribosomes during protein biosynthesis. This is Elongation factor Tu from Carsonella ruddii (strain PV).